We begin with the raw amino-acid sequence, 717 residues long: Polyribonucleotide nucleotidyltransferase (717 aa).

Aspartate 488 and aspartate 494 together coordinate Mg(2+). Positions 555 to 614 constitute a KH domain; sequence PRIEVMNIPVDKIREVIGSGGKVIREIVEKTGAKINIEDDGTVKIASSSGKEIEAARKWI. In terms of domain architecture, S1 motif spans 624-692; it reads GQIYEGTVVK…ERGKVRLSMK (69 aa).

The protein belongs to the polyribonucleotide nucleotidyltransferase family. Requires Mg(2+) as cofactor.

It localises to the cytoplasm. It carries out the reaction RNA(n+1) + phosphate = RNA(n) + a ribonucleoside 5'-diphosphate. In terms of biological role, involved in mRNA degradation. Catalyzes the phosphorolysis of single-stranded polyribonucleotides processively in the 3'- to 5'-direction. The chain is Polyribonucleotide nucleotidyltransferase from Sinorhizobium fredii (strain NBRC 101917 / NGR234).